Consider the following 777-residue polypeptide: Protein translocase subunit SecA (777 aa).

ATP-binding positions include Gln-94, 112–116 (GEGKT), and Asp-501.

It belongs to the SecA family. As to quaternary structure, monomer and homodimer. Part of the essential Sec protein translocation apparatus which comprises SecA, SecYEG and auxiliary proteins SecDF. Other proteins may also be involved.

It is found in the cell membrane. The protein resides in the cytoplasm. The enzyme catalyses ATP + H2O + cellular proteinSide 1 = ADP + phosphate + cellular proteinSide 2.. Its function is as follows. Part of the Sec protein translocase complex. Interacts with the SecYEG preprotein conducting channel. Has a central role in coupling the hydrolysis of ATP to the transfer of proteins into and across the cell membrane, serving as an ATP-driven molecular motor driving the stepwise translocation of polypeptide chains across the membrane. In Mycobacterium avium (strain 104), this protein is Protein translocase subunit SecA.